The following is a 551-amino-acid chain: Endolytic murein transglycosylase (551 aa).

Residues 1–187 (MSEKSREEEK…PKKEKKSHVK (187 aa)) lie on the Cytoplasmic side of the membrane. Residues 38-180 (VRTPANEPSA…EGAKPAKPKK (143 aa)) form a disordered region. Low complexity-rich tracts occupy residues 100–110 (PSSPAEESGSR) and 145–157 (QAGP…ATET). Residues 159–174 (DIIRDTSRRSRREGAK) are compositionally biased toward basic and acidic residues. A helical transmembrane segment spans residues 188–208 (AFVISFLVFLALLSAGGYFGY). At 209–551 (QYVLDSLLPI…VAEHVNSKLN (343 aa)) the chain is on the extracellular side.

It belongs to the transglycosylase MltG family. Interacts with RodZ. Interacts with MreC in the elongasome; interaction is strongly reduced when the 90 C-terminal residues of MreC are missing. Interacts with KhpB (also called EloR/Jag) via MltG's N-terminus, suggesting the N-terminus of MltG is cytoplasmic.

The protein localises to the cell membrane. It carries out the reaction a peptidoglycan chain = a peptidoglycan chain with N-acetyl-1,6-anhydromuramyl-[peptide] at the reducing end + a peptidoglycan chain with N-acetylglucosamine at the non-reducing end.. Functions as a peptidoglycan terminase that cleaves nascent peptidoglycan strands endolytically to terminate their elongation. In terms of biological role, mutations in this gene suppress deletion of PBP2b (penA); truncation at residue 168, undefined changes between residue Ile-447 and Ala-505, and mutation of Ala-505 suppress the penA deletion. Probably part of the elongasome which synthesizes peripheral peptidoglycan. This Streptococcus pneumoniae (strain ATCC BAA-255 / R6) protein is Endolytic murein transglycosylase.